The following is a 356-amino-acid chain: Vacuolar protein sorting-associated protein 26 (356 aa).

The segment at 301–356 is disordered; that stretch reads MRRPGTEDDEEEKQTTSIPGTQKFTAPAPVEHPKPESPRSDPKSGSTSPDDNSDSS. The segment covering 315 to 324 has biased composition (polar residues); sequence TTSIPGTQKF. The span at 331–342 shows a compositional bias: basic and acidic residues; the sequence is EHPKPESPRSDP.

This sequence belongs to the VPS26 family.

In terms of biological role, may play a role in vesicular protein sorting, similar to the yeast retromer proteins. The sequence is that of Vacuolar protein sorting-associated protein 26 (vps-26) from Caenorhabditis elegans.